Consider the following 74-residue polypeptide: Large ribosomal subunit protein bL31 (74 aa).

4 residues coordinate Zn(2+): Cys-16, Cys-18, Cys-38, and Cys-41.

The protein belongs to the bacterial ribosomal protein bL31 family. Type A subfamily. Part of the 50S ribosomal subunit. Zn(2+) serves as cofactor.

Binds the 23S rRNA. This is Large ribosomal subunit protein bL31 from Mycobacteroides abscessus (strain ATCC 19977 / DSM 44196 / CCUG 20993 / CIP 104536 / JCM 13569 / NCTC 13031 / TMC 1543 / L948) (Mycobacterium abscessus).